A 121-amino-acid polypeptide reads, in one-letter code: Anther-specific protein SF2 (121 aa).

The N-terminal stretch at 1–21 (MANNSVSYLVLLLLVFVLAIS) is a signal peptide. An N-linked (GlcNAc...) asparagine glycan is attached at N115.

As to expression, epidermal anther cells.

It is found in the secreted. The protein localises to the cell wall. Its function is as follows. Anther-specific cell wall protein which could contribute to the cell wall architecture of epidermal anther cells via intermolecular disulfide bridges. In Helianthus annuus (Common sunflower), this protein is Anther-specific protein SF2.